The chain runs to 188 residues: Probable RNA 2'-phosphotransferase (188 aa).

Belongs to the KptA/TPT1 family.

Its function is as follows. Removes the 2'-phosphate from RNA via an intermediate in which the phosphate is ADP-ribosylated by NAD followed by a presumed transesterification to release the RNA and generate ADP-ribose 1''-2''-cyclic phosphate (APPR&gt;P). May function as an ADP-ribosylase. The polypeptide is Probable RNA 2'-phosphotransferase (Lacticaseibacillus paracasei (strain ATCC 334 / BCRC 17002 / CCUG 31169 / CIP 107868 / KCTC 3260 / NRRL B-441) (Lactobacillus paracasei)).